The primary structure comprises 521 residues: U4/U6 small nuclear ribonucleoprotein Prp4 (521 aa).

At Lys-26 the chain carries N6-acetyllysine. WD repeat units lie at residues 229–268 (DDRP…LHTL), 271–318 (HNTN…VADI), 321–360 (HTVR…ILHQ), 363–402 (HSMG…IMFL), 405–444 (HLKE…VYTI), 447–487 (HQNL…LKTL), and 490–521 (HEGK…WMAE).

In terms of assembly, component of the precatalytic spliceosome (spliceosome B complex). Component of the U4/U6-U5 tri-snRNP complex, a building block of the precatalytic spliceosome (spliceosome B complex). The U4/U6-U5 tri-snRNP complex is composed of the U4, U6 and U5 snRNAs and at least PRPF3, PRPF4, PRPF6, PRPF8, PRPF31, SNRNP200, TXNL4A, SNRNP40, SNRPB, SNRPD1, SNRPD2, SNRPD3, SNRPE, SNRPF, SNRPG, DDX23, CD2BP2, PPIH, SNU13, EFTUD2, SART1 and USP39, plus LSM2, LSM3, LSM4, LSM5, LSM6, LSM7 and LSM8. Interacts directly with PRPF18, PPIH and PRPF3. Part of a heteromeric complex containing PPIH, PRPF3 and PRPF4 that is stable in the absence of RNA. Interacts with ERCC6.

It localises to the nucleus. The protein localises to the nucleus speckle. Plays a role in pre-mRNA splicing as component of the U4/U6-U5 tri-snRNP complex that is involved in spliceosome assembly, and as component of the precatalytic spliceosome (spliceosome B complex). This chain is U4/U6 small nuclear ribonucleoprotein Prp4 (PRPF4), found in Bos taurus (Bovine).